Here is a 208-residue protein sequence, read N- to C-terminus: N-(5'-phosphoribosyl)anthranilate isomerase (208 aa).

Belongs to the TrpF family.

The catalysed reaction is N-(5-phospho-beta-D-ribosyl)anthranilate = 1-(2-carboxyphenylamino)-1-deoxy-D-ribulose 5-phosphate. The protein operates within amino-acid biosynthesis; L-tryptophan biosynthesis; L-tryptophan from chorismate: step 3/5. The sequence is that of N-(5'-phosphoribosyl)anthranilate isomerase from Chlamydia trachomatis serovar A (strain ATCC VR-571B / DSM 19440 / HAR-13).